We begin with the raw amino-acid sequence, 136 residues long: uncharacterized protein (136 aa).

Disordered stretches follow at residues 23 to 44 and 56 to 95; these read QESLKSRIEDKNGDVASPKEDN and DGVITSEEGCSSSGEKENSGLCSEESSEEDPEEAEEESAR. Low complexity predominate over residues 61-79; that stretch reads SEEGCSSSGEKENSGLCSE. The span at 80 to 91 shows a compositional bias: acidic residues; it reads ESSEEDPEEAEE.

This is an uncharacterized protein from Saccharomyces cerevisiae (strain ATCC 204508 / S288c) (Baker's yeast).